Reading from the N-terminus, the 363-residue chain is Fructose-bisphosphate aldolase C-B (363 aa).

Substrate-binding residues include Arg-56 and Lys-147. Glu-188 (proton acceptor) is an active-site residue. Residue Lys-230 is the Schiff-base intermediate with dihydroxyacetone-P of the active site.

It belongs to the class I fructose-bisphosphate aldolase family. In terms of assembly, homotetramer.

It catalyses the reaction beta-D-fructose 1,6-bisphosphate = D-glyceraldehyde 3-phosphate + dihydroxyacetone phosphate. Its pathway is carbohydrate degradation; glycolysis; D-glyceraldehyde 3-phosphate and glycerone phosphate from D-glucose: step 4/4. The protein is Fructose-bisphosphate aldolase C-B (aldocb) of Danio rerio (Zebrafish).